A 102-amino-acid chain; its full sequence is Small ribosomal subunit protein uS10 (102 aa).

This sequence belongs to the universal ribosomal protein uS10 family. In terms of assembly, part of the 30S ribosomal subunit.

In terms of biological role, involved in the binding of tRNA to the ribosomes. In Acidothermus cellulolyticus (strain ATCC 43068 / DSM 8971 / 11B), this protein is Small ribosomal subunit protein uS10.